The sequence spans 248 residues: Deoxyribose-phosphate aldolase (248 aa).

Aspartate 117 serves as the catalytic Proton donor/acceptor. The active-site Schiff-base intermediate with acetaldehyde is lysine 179. The active-site Proton donor/acceptor is lysine 208.

This sequence belongs to the DeoC/FbaB aldolase family. DeoC type 1 subfamily.

The protein localises to the cytoplasm. It catalyses the reaction 2-deoxy-D-ribose 5-phosphate = D-glyceraldehyde 3-phosphate + acetaldehyde. It participates in carbohydrate degradation; 2-deoxy-D-ribose 1-phosphate degradation; D-glyceraldehyde 3-phosphate and acetaldehyde from 2-deoxy-alpha-D-ribose 1-phosphate: step 2/2. In terms of biological role, catalyzes a reversible aldol reaction between acetaldehyde and D-glyceraldehyde 3-phosphate to generate 2-deoxy-D-ribose 5-phosphate. The sequence is that of Deoxyribose-phosphate aldolase from Thermotoga petrophila (strain ATCC BAA-488 / DSM 13995 / JCM 10881 / RKU-1).